An 835-amino-acid polypeptide reads, in one-letter code: Protein VP3 (835 aa).

The segment at Arg-171–Lys-245 is N7-methyltransferase activity. The interval Trp-246–Gly-428 is 2'-O-methyltransferase activity. The segment at Val-429–Asp-555 is N7-methyltransferase activity. The interval Lys-556–Thr-692 is GTase/RTPase activity. Positions Tyr-693 to Glu-835 are 2'-5'-phosphodiesterase activity. Catalysis depends on for 2'-5'-phosphodiesterase activity residues His-718, Thr-720, His-797, and Thr-799.

Belongs to the rotavirus VP3 family. As to quaternary structure, interacts with VP1. Interacts with VP2.

Its subcellular location is the virion. The enzyme catalyses a 5'-end diphospho-ribonucleoside in mRNA + GTP + H(+) = a 5'-end (5'-triphosphoguanosine)-ribonucleoside in mRNA + diphosphate. The catalysed reaction is a 5'-end (5'-triphosphoguanosine)-ribonucleoside in mRNA + S-adenosyl-L-methionine = a 5'-end (N(7)-methyl 5'-triphosphoguanosine)-ribonucleoside in mRNA + S-adenosyl-L-homocysteine. It carries out the reaction 5'-triphosphoadenylyl-(2'-&gt;5')-adenylyl-(2'-&gt;5')-adenosine + 2 H2O = 2 AMP + ATP + 2 H(+). Multifunctional enzyme involved in mRNA capping. Catalyzes the formation of the 5' cap structure on the viral plus-strand transcripts. Specifically binds to GTP and displays guanylyltransferase and methyltransferase activities. Has affinity for ssRNA but not for dsRNA. Capping activity is non-specific and caps RNAs that initiate with either a G or an A residue. Together with VP1 polymerase, forms a VP1-VP3 complex positioned near the channels situated at each of the five-fold vertices of the core. Following infection, the outermost layer of the virus is lost, leaving a double-layered particle (DLP) made up of the core and VP6 shell. VP1 then catalyzes the transcription of fully conservative plus-strand genomic RNAs that are capped by VP3 and extruded through the DLP's channels into the cytoplasm where they function as mRNAs for translation of viral proteins. DLPs probably have an RNA triphosphatase activity as well, whereas open cores do not. Its function is as follows. Counteracts the host innate immune response thanks to its phosphodiesterase that degrades the 5'-triphosphorylated, 2'-5' linked adenylate oligomers produced by the host cell IFN-inducible 2',5'-oligoadenylate synthetase (OAS). The host RNaseL is therefore not activated. This Homo sapiens (Human) protein is Protein VP3.